The primary structure comprises 77 residues: Large ribosomal subunit protein uL29 (77 aa).

The protein belongs to the universal ribosomal protein uL29 family.

The sequence is that of Large ribosomal subunit protein uL29 from Gluconobacter oxydans (strain 621H) (Gluconobacter suboxydans).